The sequence spans 251 residues: MTDTIRADGRTADQLRPVTIERAWNRKAEGSALVSFGGTRVLCTASFTNGVPRWMSGKGRGWVTAEYAMLPRSTNDRMDRESVKGRIGGRTHEISRLIGRSLRAVVDMKALGENTIVLDCDVLQADGGTRTAAITGAYVALADALEWGREHRFIGQKAAPLLDSVSAVSVGIVDGSPMLDLAYTEDVRAETDMNVVVTGRGLFVEVQGTAEGAPFDRSELNGLLDLALAGTTALVAVQSAALAAPAPGCEG.

Residues Arg-90 and Gly-128–Arg-130 contribute to the phosphate site.

Belongs to the RNase PH family. As to quaternary structure, homohexameric ring arranged as a trimer of dimers.

It carries out the reaction tRNA(n+1) + phosphate = tRNA(n) + a ribonucleoside 5'-diphosphate. Functionally, phosphorolytic 3'-5' exoribonuclease that plays an important role in tRNA 3'-end maturation. Removes nucleotide residues following the 3'-CCA terminus of tRNAs; can also add nucleotides to the ends of RNA molecules by using nucleoside diphosphates as substrates, but this may not be physiologically important. Probably plays a role in initiation of 16S rRNA degradation (leading to ribosome degradation) during starvation. The chain is Ribonuclease PH from Leifsonia xyli subsp. xyli (strain CTCB07).